Here is a 423-residue protein sequence, read N- to C-terminus: Ankyrin repeat and SAM domain-containing protein 4B (423 aa).

The segment at 1-251 is mediates localization to microvilli; it reads MSTRYHQAAS…PKDFKEKLHF (251 aa). 3 ANK repeats span residues 31–60, 64–93, and 97–126; these read DGMT…DPDK, WGNT…NIFA, and DLKS…VQNT. Residues 130–169 are a coiled coil; the sequence is KRVTRLKEQALKNARKQMKECERLQERHQNKMARTYSKED. Disordered stretches follow at residues 158–181, 207–227, and 303–335; these read QNKM…STLS, KSKK…SGQR, and QRQG…AGDL. Residues 171-181 are compositionally biased toward low complexity; sequence GTISSSHSTLS. Basic and acidic residues predominate over residues 207-224; sequence KSKKNKDTTEQLEKDGRS. The interval 253–352 is mediates interaction with MYO7B; that stretch reads VEEDDDVQHE…EWEEDAVDAT (100 aa). Residues 301 to 335 are a coiled coil; that stretch reads LFQRQGAAGTVEEEEEEEEEEEEEKREANGTAGDL. A compositionally biased stretch (acidic residues) spans 311–324; sequence VEEEEEEEEEEEEE. Positions 357-409 constitute an SAM domain; sequence FLQSQHLEEFLPIFMREQIDLEALLLCSDEDLQNIHMQLGPRKKVLSAIDKRK. The PDZ-binding; mediates interaction with USH1C signature appears at 421-423; that stretch reads TSL.

Part of the IMAC/intermicrovillar adhesion complex/intermicrovillar tip-link complex composed of ANKS4B, MYO7B, USH1C, CDHR2 and CDHR5. Interacts with USH1C; the interaction is direct and is required for ANKS4B localization to the tip of microvilli. Interacts with MYO7B; the interaction is direct. May interact with HSPA5. In terms of tissue distribution, cochlea, kidney, lung, liver, pancreas, salivary gland and small intestine (at protein level). Expressed in kidney, small intestine, pancreas, liver and colon. Not detected in heart, spleen and brain.

The protein localises to the cell projection. Its subcellular location is the microvillus. Functionally, as part of the intermicrovillar adhesion complex/IMAC plays a role in epithelial brush border differentiation, controlling microvilli organization and length. Plays a role in assembly of the complex. May play a role in cellular response to endoplasmic reticulum stress. This is Ankyrin repeat and SAM domain-containing protein 4B from Mus musculus (Mouse).